Here is a 323-residue protein sequence, read N- to C-terminus: Aldo-keto reductase family 1 member C4 (323 aa).

Residues 20 to 24 (GFGSY) and aspartate 50 contribute to the NADP(+) site. The Proton donor role is filled by tyrosine 55. A substrate-binding site is contributed by histidine 117. NADP(+) is bound by residues 166–167 (SN), glutamine 190, 216–221 (HSALGT), and 270–280 (KSYNEQRIREN).

This sequence belongs to the aldo/keto reductase family. As to quaternary structure, monomer. High expression in liver. Also expressed in kidney.

Its subcellular location is the cytoplasm. It localises to the cytosol. The enzyme catalyses chlordecone alcohol + NADP(+) = chlordecone + NADPH + H(+). It carries out the reaction a 3alpha-hydroxysteroid + NADP(+) = a 3-oxosteroid + NADPH + H(+). It catalyses the reaction a 3alpha-hydroxysteroid + NAD(+) = a 3-oxosteroid + NADH + H(+). The catalysed reaction is 5alpha-androstane-3alpha,17beta-diol + NADP(+) = 17beta-hydroxy-5alpha-androstan-3-one + NADPH + H(+). The enzyme catalyses 5alpha-androstane-3beta,17beta-diol + NADP(+) = 17beta-hydroxy-5alpha-androstan-3-one + NADPH + H(+). It carries out the reaction 5alpha-androstane-3alpha,17beta-diol + NAD(+) = 17beta-hydroxy-5alpha-androstan-3-one + NADH + H(+). It catalyses the reaction 17beta-estradiol + NADP(+) = estrone + NADPH + H(+). The catalysed reaction is 17beta-estradiol + NAD(+) = estrone + NADH + H(+). The enzyme catalyses (20S)-hydroxypregn-4-en-3-one + NADP(+) = progesterone + NADPH + H(+). It carries out the reaction (20S)-hydroxypregn-4-en-3-one + NAD(+) = progesterone + NADH + H(+). It catalyses the reaction androsterone + NADP(+) = 5alpha-androstan-3,17-dione + NADPH + H(+). The catalysed reaction is testosterone + NADP(+) = androst-4-ene-3,17-dione + NADPH + H(+). The enzyme catalyses testosterone + NAD(+) = androst-4-ene-3,17-dione + NADH + H(+). It carries out the reaction 3alpha-hydroxy-5alpha-androstane 17-O-(beta-D-glucuronate) + NADP(+) = 5alpha-dihydrotestosterone 17-O-(beta-D-glucuronate) + NADPH + H(+). It catalyses the reaction (3beta,5alpha,17beta)-3-hydroxy-androstan-17-yl sulfate + NADP(+) = 5alpha-dihydrotestosterone sulfate + NADPH + H(+). The catalysed reaction is 5alpha-androstane-3alpha,17beta-diol + NAD(+) = androsterone + NADH + H(+). The protein operates within steroid metabolism. With respect to regulation, potently inhibited by benzbromarone, 3',3'',5',5''-tetrabromophenolphthalein (TBPP) and o-cresolphthalein. Functionally, cytosolic aldo-keto reductase that catalyzes the NADH and NADPH-dependent reduction of ketosteroids to hydroxysteroids. Liver specific enzyme that acts as an NAD(P)(H)-dependent 3-, 17- and 20-ketosteroid reductase on the steroid nucleus and side chain. Displays the ability to catalyze both oxidation and reduction in vitro, but most probably acts as a reductase in vivo since the oxidase activity measured in vitro is inhibited by physiological concentration of NADPH. Acts preferentially as a 3-alpha-hydroxysteroid dehydrogenase (HSD) with a subsidiary 3-beta-HSD activity. Catalyzes efficiently the transformation of the potent androgen 5-alpha-dihydrotestosterone (5alpha-DHT or 17beta-hydroxy-5alpha-androstan-3-one) into the less active form, 5-alpha-androstan-3-alpha,17-beta-diol (3-alpha-diol). Catalyzes the reduction of estrone into 17beta-estradiol but with low efficiency. Metabolizes a broad spectrum of natural and synthetic therapeutic steroid and plays an important role in metabolism of androgens, estrogens, progestereone and conjugated steroids. Catalyzes the biotransformation of the pesticide chlordecone (kepone) to its corresponding alcohol leading to increased biliary excretion of the pesticide and concomitant reduction of its neurotoxicity since bile is the major excretory route. The polypeptide is Aldo-keto reductase family 1 member C4 (AKR1C4) (Macaca fuscata fuscata (Japanese macaque)).